We begin with the raw amino-acid sequence, 3739 residues long: Cardiomyopathy-associated protein 5 (3739 aa).

Disordered stretches follow at residues methionine 1 to threonine 205, serine 268 to valine 814, valine 835 to serine 884, leucine 967 to proline 1270, threonine 1288 to lysine 1313, serine 1325 to serine 1637, glutamate 1650 to lysine 1969, serine 1986 to proline 2016, phenylalanine 2065 to arginine 2246, alanine 2273 to aspartate 2318, valine 2377 to glutamate 2498, lysine 2513 to aspartate 2532, and serine 2579 to glutamine 2616. The span at alanine 18–proline 47 shows a compositional bias: acidic residues. The segment covering aspartate 48–glutamine 62 has biased composition (basic and acidic residues). Residues threonine 84 to isoleucine 106 show a composition bias toward polar residues. Residues arginine 130–arginine 153 show a composition bias toward basic residues. At serine 155 the chain carries Phosphoserine. 2 stretches are compositionally biased toward polar residues: residues leucine 156–proline 175 and alanine 325–glutamate 336. A coiled-coil region spans residues alanine 380–serine 406. 3 stretches are compositionally biased toward basic and acidic residues: residues isoleucine 479–glutamate 637, serine 644–glutamate 663, and serine 670–valine 730. A run of 2 repeats spans residues arginine 482–histidine 493 and arginine 494–histidine 505. The interval arginine 482–histidine 720 is 20 X 12 AA approximate tandem repeats of R-[DE]-[EK]-[EG]-H-[AV]-P-E-[PS]-[IM]-V-[HLR]. Residues arginine 506 to histidine 519 form a 3; approximate repeat. Repeat 4 spans residues arginine 520 to histidine 531. One copy of the 5; approximate repeat lies at arginine 532–histidine 545. A 6; approximate repeat occupies arginine 546–histidine 559. 4 tandem repeats follow at residues arginine 560–histidine 571, arginine 572–histidine 583, arginine 584–histidine 595, and arginine 596–histidine 607. The 11; approximate repeat unit spans residues arginine 608–arginine 621. The 12; approximate repeat unit spans residues lysine 622–histidine 633. The 14; approximate repeat unit spans residues arginine 634–histidine 647. Copy 15 of the repeat occupies arginine 648–histidine 659. Residues arginine 660–histidine 673 form a 16; approximate repeat. Tandem repeats lie at residues arginine 674 to leucine 685, arginine 686 to arginine 696, arginine 697 to histidine 708, and arginine 709 to histidine 720. Residues threonine 740–tyrosine 756 show a composition bias toward acidic residues. At serine 850 the chain carries Phosphoserine. Polar residues-rich tracts occupy residues proline 861–serine 884 and cysteine 1151–leucine 1161. Basic and acidic residues-rich tracts occupy residues alanine 1188–proline 1197 and glutamate 1230–serine 1242. A compositionally biased stretch (polar residues) spans threonine 1337–serine 1351. Composition is skewed to basic and acidic residues over residues leucine 1441–proline 1460 and threonine 1476–arginine 1486. Positions alanine 1522 to lysine 1540 are enriched in polar residues. 6 stretches are compositionally biased toward basic and acidic residues: residues asparagine 1620–aspartate 1631, isoleucine 1697–leucine 1706, glycine 1726–lysine 1742, isoleucine 1760–histidine 1770, aspartate 1786–glutamate 1803, and glutamate 1836–proline 1850. Polar residues predominate over residues glutamine 1854–leucine 1863. Basic and acidic residues-rich tracts occupy residues aspartate 1874 to glutamate 1885, leucine 1896 to lysine 1916, lysine 1992 to threonine 2001, and alanine 2153 to threonine 2165. Over residues lysine 2181 to methionine 2190 the composition is skewed to polar residues. A Phosphoserine modification is found at serine 2192. Basic and acidic residues-rich tracts occupy residues glycine 2212 to glutamate 2244, arginine 2279 to glutamine 2299, lysine 2306 to aspartate 2318, valine 2377 to glycine 2419, and glutamate 2429 to valine 2448. Serine 2411 bears the Phosphoserine mark. Serine 2495 carries the post-translational modification Phosphoserine. Positions lysine 2513 to threonine 2523 are enriched in basic and acidic residues. Positions serine 2640–serine 2664 form a coiled coil. 6 disordered regions span residues valine 2667–valine 2725, leucine 2742–glutamate 2773, glycine 2791–leucine 2835, glutamate 2881–isoleucine 2959, leucine 3027–leucine 3047, and proline 3111–proline 3174. Over residues serine 2682 to isoleucine 2709 the composition is skewed to basic and acidic residues. A required for RYR2 clustering region spans residues tyrosine 2731–alanine 3041. Polar residues predominate over residues lysine 2762–glutamate 2773. Composition is skewed to basic and acidic residues over residues glycine 2791–methionine 2804 and lysine 2812–serine 2828. Serine 2905 is subject to Phosphoserine. Residues tyrosine 2918 to serine 2929 are compositionally biased toward basic and acidic residues. Positions glutamate 3030–leucine 3047 are enriched in polar residues. The span at valine 3153–alanine 3162 shows a compositional bias: basic and acidic residues. Residues lysine 3187–alanine 3214 form an amphipathic helix H1 region. Positions valine 3215 to threonine 3342 are B-box coiled-coil; BBC. Residues phenylalanine 3244–valine 3323 adopt a coiled-coil conformation. The amphipathic helix H2 stretch occupies residues serine 3301–glutamate 3318. 2 consecutive Fibronectin type-III domains span residues valine 3374 to serine 3475 and threonine 3476 to threonine 3568. An amphipathic helix H3 region spans residues glutamate 3421–cysteine 3437. The B30.2/SPRY domain occupies asparagine 3550–serine 3735.

In terms of assembly, interacts with PRKAR2A. Interacts with ACTN2, DES and DTNBP1/dysbindin. Interacts with DMD/dystrophin. Interacts with the calcineurin catalytic subunit PPP3CA. Interacts with TTN. Interacts with CAPN3; this interaction, which results in CMYA5 proteolysis, may protect CAPN3 from autolysis. Interacts with FSD2. In cardiac muscles, identified in a complex composed of FSD2, CMYA5 and RYR2. Post-translationally, phosphorylated by PKA. In terms of tissue distribution, expressed in skin as well as in cardiac muscle. Expressed in skeletal muscle (at protein level).

The protein resides in the nucleus. The protein localises to the cytoplasm. Its subcellular location is the perinuclear region. It localises to the myofibril. It is found in the sarcomere. The protein resides in the m line. The protein localises to the sarcoplasmic reticulum. Functionally, may serve as an anchoring protein that mediates the subcellular compartmentation of protein kinase A (PKA) via binding to PRKAR2A. May attenuate calcineurin ability to induce slow-fiber gene program in muscle and may negatively modulate skeletal muscle regeneration. Plays a role in the assembly of ryanodine receptor (RYR2) clusters in striated muscle. The protein is Cardiomyopathy-associated protein 5 (Cmya5) of Mus musculus (Mouse).